Consider the following 293-residue polypeptide: Acetylglutamate kinase (293 aa).

Residues 71 to 72, R93, and N186 each bind substrate; that span reads GG.

This sequence belongs to the acetylglutamate kinase family. ArgB subfamily.

The protein resides in the cytoplasm. It catalyses the reaction N-acetyl-L-glutamate + ATP = N-acetyl-L-glutamyl 5-phosphate + ADP. It functions in the pathway amino-acid biosynthesis; L-arginine biosynthesis; N(2)-acetyl-L-ornithine from L-glutamate: step 2/4. Its function is as follows. Catalyzes the ATP-dependent phosphorylation of N-acetyl-L-glutamate. This chain is Acetylglutamate kinase, found in Synechococcus sp. (strain WH7803).